The sequence spans 310 residues: D-alanyl-D-alanine endopeptidase (310 aa).

A signal peptide spans 1–23; it reads MRNRLLSLVTLFLSLSVATAVSA. S66 serves as the catalytic Acyl-ester intermediate. Catalysis depends on K69, which acts as the Proton acceptor. S123 is an active-site residue. K230 provides a ligand contact to substrate.

It belongs to the peptidase S11 family.

The protein resides in the periplasm. Its function is as follows. Cell wall formation. This chain is D-alanyl-D-alanine endopeptidase (pbpG), found in Pseudomonas aeruginosa (strain ATCC 15692 / DSM 22644 / CIP 104116 / JCM 14847 / LMG 12228 / 1C / PRS 101 / PAO1).